The sequence spans 200 residues: N-(5'-phosphoribosyl)anthranilate isomerase (200 aa).

The protein belongs to the TrpF family.

It catalyses the reaction N-(5-phospho-beta-D-ribosyl)anthranilate = 1-(2-carboxyphenylamino)-1-deoxy-D-ribulose 5-phosphate. It participates in amino-acid biosynthesis; L-tryptophan biosynthesis; L-tryptophan from chorismate: step 3/5. This is N-(5'-phosphoribosyl)anthranilate isomerase from Endomicrobium trichonymphae.